Consider the following 109-residue polypeptide: Large ribosomal subunit protein uL22 (109 aa).

It belongs to the universal ribosomal protein uL22 family. In terms of assembly, part of the 50S ribosomal subunit.

Its function is as follows. This protein binds specifically to 23S rRNA; its binding is stimulated by other ribosomal proteins, e.g. L4, L17, and L20. It is important during the early stages of 50S assembly. It makes multiple contacts with different domains of the 23S rRNA in the assembled 50S subunit and ribosome. In terms of biological role, the globular domain of the protein is located near the polypeptide exit tunnel on the outside of the subunit, while an extended beta-hairpin is found that lines the wall of the exit tunnel in the center of the 70S ribosome. The protein is Large ribosomal subunit protein uL22 of Bordetella petrii (strain ATCC BAA-461 / DSM 12804 / CCUG 43448).